A 60-amino-acid polypeptide reads, in one-letter code: Large ribosomal subunit protein bL32 (60 aa).

The tract at residues 1–23 (MAVPRNRHSNARKNIRRSHHAKQ) is disordered.

It belongs to the bacterial ribosomal protein bL32 family.

This chain is Large ribosomal subunit protein bL32, found in Chlamydia abortus (strain DSM 27085 / S26/3) (Chlamydophila abortus).